The sequence spans 400 residues: Selection and upkeep of intraepithelial T-cells protein 2 (400 aa).

Residues 1–21 (MGATGVLLCVVLHFLQMVTQS) form the signal peptide. Topologically, residues 22 to 240 (SEKFTVTGLQ…LSGELFSWKR (219 aa)) are extracellular. One can recognise an Ig-like V-type domain in the interval 23-133 (EKFTVTGLQR…VGEFYEEHIT (111 aa)). 2 disulfide bridges follow: cysteine 46-cysteine 120 and cysteine 160-cysteine 214. The 87-residue stretch at 139 to 225 (ATSSVMYILM…LQNLLTHQEE (87 aa)) folds into the Ig-like C1-type domain. Asparagine 197 carries N-linked (GlcNAc...) asparagine glycosylation. A helical transmembrane segment spans residues 241–261 (VWIMILTTIGFMMIAFCMTYC). Residues 262 to 280 (VQQHLLYGTFSKGKCHWLK) are Cytoplasmic-facing. A helical membrane pass occupies residues 281–301 (STMIFMFSVIAVTGVMLILHL). At 302 to 321 (KQRVPVSDQHFELDTLWLED) the chain is on the extracellular side. Residues 322–342 (ISVILCVLIVFIIKLISFIYF) traverse the membrane as a helical segment. Residues 343–400 (RLEGDHQGWSLPPYLSATPTAAICRLAVPEYSRGHLQLDSEDDLAGMGPSPFFITPCF) lie on the Cytoplasmic side of the membrane.

The protein belongs to the SKINT family. In terms of tissue distribution, expressed in skin, thymus and mammary gland.

The protein localises to the membrane. Functionally, may act by engaging a cell surface molecule on immature T-cells in the embryonic thymus. The sequence is that of Selection and upkeep of intraepithelial T-cells protein 2 (Skint2) from Mus musculus (Mouse).